The sequence spans 208 residues: Protein-L-isoaspartate O-methyltransferase (208 aa).

Ser-59 is an active-site residue.

It belongs to the methyltransferase superfamily. L-isoaspartyl/D-aspartyl protein methyltransferase family. As to quaternary structure, monomer.

Its subcellular location is the cytoplasm. It carries out the reaction [protein]-L-isoaspartate + S-adenosyl-L-methionine = [protein]-L-isoaspartate alpha-methyl ester + S-adenosyl-L-homocysteine. Its function is as follows. Catalyzes the methyl esterification of L-isoaspartyl residues in peptides and proteins that result from spontaneous decomposition of normal L-aspartyl and L-asparaginyl residues. It plays a role in the repair and/or degradation of damaged proteins. This Shigella flexneri protein is Protein-L-isoaspartate O-methyltransferase (pcm).